A 342-amino-acid chain; its full sequence is Methionyl-tRNA formyltransferase (342 aa).

119–122 (SILP) is a (6S)-5,6,7,8-tetrahydrofolate binding site.

The protein belongs to the Fmt family.

It catalyses the reaction L-methionyl-tRNA(fMet) + (6R)-10-formyltetrahydrofolate = N-formyl-L-methionyl-tRNA(fMet) + (6S)-5,6,7,8-tetrahydrofolate + H(+). Functionally, attaches a formyl group to the free amino group of methionyl-tRNA(fMet). The formyl group appears to play a dual role in the initiator identity of N-formylmethionyl-tRNA by promoting its recognition by IF2 and preventing the misappropriation of this tRNA by the elongation apparatus. The sequence is that of Methionyl-tRNA formyltransferase from Nostoc sp. (strain PCC 7120 / SAG 25.82 / UTEX 2576).